Reading from the N-terminus, the 339-residue chain is Very-long-chain 3-oxoacyl-CoA reductase (339 aa).

A helical membrane pass occupies residues 21–41 (WTTFLLALGSFNALRIIYQTL). NADP(+) contacts are provided by Val67, Asn96, Asp121, Asn148, Tyr215, Lys219, Val248, and Ser250. The active-site Proton acceptor is the Tyr215. The active-site Lowers pKa of active site Tyr is Lys219.

Belongs to the short-chain dehydrogenases/reductases (SDR) family.

Its subcellular location is the endoplasmic reticulum membrane. The catalysed reaction is a very-long-chain (3R)-3-hydroxyacyl-CoA + NADP(+) = a very-long-chain 3-oxoacyl-CoA + NADPH + H(+). The protein operates within lipid metabolism; fatty acid biosynthesis. Its function is as follows. Component of the microsomal membrane bound fatty acid elongation system, which produces the 26-carbon very long-chain fatty acids (VLCFA) from palmitate. Catalyzes the reduction of the 3-ketoacyl-CoA intermediate that is formed in each cycle of fatty acid elongation. VLCFAs serve as precursors for ceramide and sphingolipids. In Coprinopsis cinerea (strain Okayama-7 / 130 / ATCC MYA-4618 / FGSC 9003) (Inky cap fungus), this protein is Very-long-chain 3-oxoacyl-CoA reductase.